The following is a 540-amino-acid chain: Decreased expression in renal and prostate cancer protein (540 aa).

Residues Met1–Pro12 are compositionally biased toward basic and acidic residues. 2 disordered regions span residues Met1 to Ala264 and Ser304 to Gln389. Composition is skewed to low complexity over residues Pro113–Ser125 and Gly180–Gly192. Over residues Ser304–Ser316 the composition is skewed to polar residues. At Ser313 the chain carries Phosphoserine. The segment covering Pro321 to Pro330 has biased composition (low complexity). Arg375 bears the Asymmetric dimethylarginine mark. Arg403 is subject to Omega-N-methylarginine. Ser439 carries the phosphoserine modification. Residues Gly516–Pro540 are disordered.

The protein belongs to the DERPC family.

It localises to the nucleus. Its function is as follows. Potential tumor suppressor. The sequence is that of Decreased expression in renal and prostate cancer protein from Bos taurus (Bovine).